We begin with the raw amino-acid sequence, 439 residues long: ATP-dependent RNA helicase SrmB (439 aa).

Residues 4-32 (SQFEQFDLSPELLKALEKKGYSRPTAIQM) carry the Q motif motif. The Helicase ATP-binding domain occupies 35-209 (IPAAMEESDV…AERLLNDPVK (175 aa)). An ATP-binding site is contributed by 48 to 55 (APTGTGKT). The DEAD box motif lies at 157 to 160 (DEAD). The Helicase C-terminal domain maps to 237-387 (KLLARFIETE…GLEPRTKPPK (151 aa)). Basic and acidic residues predominate over residues 381 to 393 (PRTKPPKDGEVKS). Residues 381-439 (PRTKPPKDGEVKSVSKKQKARIKEKREEKKKTEAKKKVKLRHKDTKNIGKRRKPSNSNV) are disordered. Composition is skewed to basic residues over residues 394-403 (VSKKQKARIK) and 412-439 (TEAK…NSNV).

The protein belongs to the DEAD box helicase family. SrmB subfamily. Interacts with the 50S ribosomal subunit.

The protein resides in the cytoplasm. The catalysed reaction is ATP + H2O = ADP + phosphate + H(+). DEAD-box RNA helicase involved in the assembly of the 50S ribosomal subunit at low temperature. Exhibits RNA-stimulated ATP hydrolysis and RNA unwinding activity. This chain is ATP-dependent RNA helicase SrmB, found in Haemophilus influenzae (strain ATCC 51907 / DSM 11121 / KW20 / Rd).